A 152-amino-acid polypeptide reads, in one-letter code: UPF0178 protein swp_1285 (152 aa).

It belongs to the UPF0178 family.

In Shewanella piezotolerans (strain WP3 / JCM 13877), this protein is UPF0178 protein swp_1285.